Consider the following 138-residue polypeptide: Gonadotropin subunit beta-2 (138 aa).

The signal sequence occupies residues 1 to 21 (MPASSYFLLFFFMNFFSPAQS). Intrachain disulfides connect C27-C75, C41-C90, C44-C128, C52-C106, C56-C108, and C111-C118. N-linked (GlcNAc...) asparagine glycosylation is present at N31.

Belongs to the glycoprotein hormones subunit beta family. As to quaternary structure, heterodimer of an alpha and a beta chain.

It is found in the secreted. Functionally, involved in gametogenesis and steroidogenesis. The polypeptide is Gonadotropin subunit beta-2 (cgbb) (Clarias gariepinus (North African catfish)).